Consider the following 397-residue polypeptide: Elongation factor Tu (397 aa).

Residues 10–206 (KPHVNIGTIG…AVDESIPDPV (197 aa)) enclose the tr-type G domain. The interval 19–26 (GHVDHGKT) is G1. Residue 19-26 (GHVDHGKT) participates in GTP binding. Threonine 26 contributes to the Mg(2+) binding site. The tract at residues 62–66 (GITIN) is G2. The tract at residues 83–86 (DAPG) is G3. GTP contacts are provided by residues 83 to 87 (DAPGH) and 138 to 141 (NKSD). The interval 138–141 (NKSD) is G4. Positions 176–178 (SAL) are G5.

The protein belongs to the TRAFAC class translation factor GTPase superfamily. Classic translation factor GTPase family. EF-Tu/EF-1A subfamily. Monomer.

It localises to the cytoplasm. It carries out the reaction GTP + H2O = GDP + phosphate + H(+). Its function is as follows. GTP hydrolase that promotes the GTP-dependent binding of aminoacyl-tRNA to the A-site of ribosomes during protein biosynthesis. The protein is Elongation factor Tu of Mycobacteroides abscessus (strain ATCC 19977 / DSM 44196 / CCUG 20993 / CIP 104536 / JCM 13569 / NCTC 13031 / TMC 1543 / L948) (Mycobacterium abscessus).